Consider the following 37-residue polypeptide: Large ribosomal subunit protein bL36c (37 aa).

It belongs to the bacterial ribosomal protein bL36 family.

The protein localises to the plastid. Its subcellular location is the chloroplast. The sequence is that of Large ribosomal subunit protein bL36c from Nicotiana tomentosiformis (Tobacco).